The following is a 651-amino-acid chain: UvrABC system protein B (651 aa).

Residues Arg-25–Ile-411 form the Helicase ATP-binding domain. Gly-38–Thr-45 is an ATP binding site. Positions Tyr-91–Ile-114 match the Beta-hairpin motif. One can recognise a Helicase C-terminal domain in the interval Asp-427–Val-591. The disordered stretch occupies residues Thr-593 to Ala-615. A UVR domain is found at Asn-616 to Pro-651.

Belongs to the UvrB family. As to quaternary structure, forms a heterotetramer with UvrA during the search for lesions. Interacts with UvrC in an incision complex.

Its subcellular location is the cytoplasm. Its function is as follows. The UvrABC repair system catalyzes the recognition and processing of DNA lesions. A damage recognition complex composed of 2 UvrA and 2 UvrB subunits scans DNA for abnormalities. Upon binding of the UvrA(2)B(2) complex to a putative damaged site, the DNA wraps around one UvrB monomer. DNA wrap is dependent on ATP binding by UvrB and probably causes local melting of the DNA helix, facilitating insertion of UvrB beta-hairpin between the DNA strands. Then UvrB probes one DNA strand for the presence of a lesion. If a lesion is found the UvrA subunits dissociate and the UvrB-DNA preincision complex is formed. This complex is subsequently bound by UvrC and the second UvrB is released. If no lesion is found, the DNA wraps around the other UvrB subunit that will check the other stand for damage. The chain is UvrABC system protein B from Anaplasma marginale (strain St. Maries).